We begin with the raw amino-acid sequence, 311 residues long: Formyltransferase/hydrolase complex subunit D (311 aa).

The protein belongs to the FTR family. Homotetramer. Octaheteromer. Part of the formyltransferase/hydrolase complex fhc; composed of FhcA, FhcB, FhcC and FhcD.

The protein localises to the cytoplasm. It carries out the reaction N-formylmethanofuran + 5,6,7,8-tetrahydromethanopterin + H(+) = N(5)-formyl-5,6,7,8-tetrahydromethanopterin + methanofuran. It participates in one-carbon metabolism; formaldehyde degradation; formate from formaldehyde (H(4)MPT route): step 4/5. In terms of biological role, involved in the transformation of 5-formyl tetrahydromethanopterin (5-formyl-H(4)MPT) to methanofuran (MFR) and formate via the intermediate formylmethanofuran (formyl-MFR). Catalyzes the transfer of a formyl group from 5-formyl-H(4)MPT to MFR to produce tetrahydromethanopterin (H(4)MPT) and formyl-MFR, which is then hydrolyzed to formate and MFR. The chain is Formyltransferase/hydrolase complex subunit D from Methylorubrum extorquens (strain ATCC 14718 / DSM 1338 / JCM 2805 / NCIMB 9133 / AM1) (Methylobacterium extorquens).